Here is a 314-residue protein sequence, read N- to C-terminus: Protein phosphatase PTC7 homolog fig (314 aa).

Residues 43–309 (PYLVTVVQGR…DDITLILSSV (267 aa)) form the PPM-type phosphatase domain. Mn(2+) is bound by residues Asp-87, Gly-88, and Asp-232.

It belongs to the PP2C family. It depends on Mg(2+) as a cofactor. Requires Mn(2+) as cofactor.

The catalysed reaction is O-phospho-L-seryl-[protein] + H2O = L-seryl-[protein] + phosphate. It carries out the reaction O-phospho-L-threonyl-[protein] + H2O = L-threonyl-[protein] + phosphate. The sequence is that of Protein phosphatase PTC7 homolog fig from Drosophila sechellia (Fruit fly).